The following is a 1755-amino-acid chain: Transposon Ty1-NL1 Gag-Pol polyprotein (1755 aa).

Composition is skewed to polar residues over residues 1 to 23, 48 to 60, 71 to 86, and 131 to 152; these read MESQQLSQHSPISHGSACASVTS, TKANSQQTTTPAS, SPQTAQSHSPQNGPYQ, and PQYPSSVGTPLSTPSPESGNTF. Disordered stretches follow at residues 1–86, 131–171, and 350–420; these read MESQ…GPYQ, PQYP…YVRP, and QQES…IRGS. The span at 153–165 shows a compositional bias: low complexity; that stretch reads TDSSSADSDMTST. Positions 299-401 are RNA-binding; it reads NNGIPINNKV…NSQSRTARAH (103 aa). Residues 363–372 are compositionally biased toward basic and acidic residues; the sequence is NPSDEKKDSR. Positions 373 to 412 are enriched in polar residues; sequence TYTNTTKPKSITRNSQKPNNSQSRTARAHNVSTSNNSSGP. Aspartate 461 serves as the catalytic For protease activity; shared with dimeric partner. Residues 583 to 640 are integrase-type zinc finger-like; the sequence is NVHTSESTRKYPYPFIHRMLAHANAQTIRYSLKNNTITYFNESDVDWSSAIDYQCPDC. In terms of domain architecture, Integrase catalytic spans 660 to 835; sequence NSYEPFQYLH…AGLDISTLLP (176 aa). Aspartate 671 and aspartate 736 together coordinate Mg(2+). Disordered stretches follow at residues 956–1120 and 1146–1172; these read SKAV…TCPK and DSFKELPPINSRQTNSSLGGIGDSNAY. Over residues 960–969 the composition is skewed to low complexity; the sequence is SPTDSTPPST. Residues 1005 to 1015 show a composition bias toward polar residues; the sequence is STPQISDIEST. Positions 1038–1053 are enriched in basic and acidic residues; that stretch reads ESSHTSKSKDFRHSDS. 2 stretches are compositionally biased toward polar residues: residues 1054–1082 and 1095–1106; these read YSDNETNHTNVPISSTGGTNNKTVPQTSE and SIDTSSSESNSL. Residues 1178–1212 carry the Bipartite nuclear localization signal motif; that stretch reads KKRSLEDNETEIKVSRDTWNTKNMRSLEPPRSKKR. The Reverse transcriptase Ty1/copia-type domain occupies 1338–1476; the sequence is NNYYITQLDI…DILGLEIKYQ (139 aa). Mg(2+) contacts are provided by aspartate 1346, aspartate 1427, aspartate 1428, aspartate 1610, glutamate 1652, and aspartate 1685. The RNase H Ty1/copia-type domain maps to 1610-1752; sequence DASYGNQPYY…IKTFKLLTNK (143 aa).

In terms of assembly, the capsid protein forms a homotrimer, from which the VLPs are assembled. The protease is a homodimer, whose active site consists of two apposed aspartic acid residues. In terms of processing, initially, virus-like particles (VLPs) are composed of the structural unprocessed proteins Gag and Gag-Pol, and also contain the host initiator methionine tRNA (tRNA(i)-Met) which serves as a primer for minus-strand DNA synthesis, and a dimer of genomic Ty RNA. Processing of the polyproteins occurs within the particle and proceeds by an ordered pathway, called maturation. First, the protease (PR) is released by autocatalytic cleavage of the Gag-Pol polyprotein yielding capsid protein p45 and a Pol-p154 precursor protein. This cleavage is a prerequisite for subsequent processing of Pol-p154 at the remaining sites to release the mature structural and catalytic proteins. Maturation takes place prior to the RT reaction and is required to produce transposition-competent VLPs.

It is found in the cytoplasm. Its subcellular location is the nucleus. It carries out the reaction DNA(n) + a 2'-deoxyribonucleoside 5'-triphosphate = DNA(n+1) + diphosphate. The catalysed reaction is Endonucleolytic cleavage to 5'-phosphomonoester.. Functionally, capsid protein (CA) is the structural component of the virus-like particle (VLP), forming the shell that encapsulates the retrotransposons dimeric RNA genome. The particles are assembled from trimer-clustered units and there are holes in the capsid shells that allow for the diffusion of macromolecules. CA also has nucleocapsid-like chaperone activity, promoting primer tRNA(i)-Met annealing to the multipartite primer-binding site (PBS), dimerization of Ty1 RNA and initiation of reverse transcription. In terms of biological role, the aspartyl protease (PR) mediates the proteolytic cleavages of the Gag and Gag-Pol polyproteins after assembly of the VLP. Reverse transcriptase/ribonuclease H (RT) is a multifunctional enzyme that catalyzes the conversion of the retro-elements RNA genome into dsDNA within the VLP. The enzyme displays a DNA polymerase activity that can copy either DNA or RNA templates, and a ribonuclease H (RNase H) activity that cleaves the RNA strand of RNA-DNA heteroduplexes during plus-strand synthesis and hydrolyzes RNA primers. The conversion leads to a linear dsDNA copy of the retrotransposon that includes long terminal repeats (LTRs) at both ends. Its function is as follows. Integrase (IN) targets the VLP to the nucleus, where a subparticle preintegration complex (PIC) containing at least integrase and the newly synthesized dsDNA copy of the retrotransposon must transit the nuclear membrane. Once in the nucleus, integrase performs the integration of the dsDNA into the host genome. In Saccharomyces cerevisiae (strain ATCC 204508 / S288c) (Baker's yeast), this protein is Transposon Ty1-NL1 Gag-Pol polyprotein (TY1B-NL1).